Consider the following 98-residue polypeptide: Small ribosomal subunit protein eS24 (98 aa).

It belongs to the eukaryotic ribosomal protein eS24 family.

This chain is Small ribosomal subunit protein eS24, found in Thermococcus onnurineus (strain NA1).